A 232-amino-acid polypeptide reads, in one-letter code: MKIGIIGAMEEEVTLLRDKIENRQTITLGGCEIYTGQLNGTEIALLKSGIGKVAAALGATLLLERCKPDVIINTGSAGGLAPTLTVGDIVVSDEARYHDADVTAFGYEFGQLPGCPAGFKADDALIAAAESCIAKLNLNAVRGLIVSGDAFINGSVGLAKIRHNFPQAIAVEMEATAIAHVCHNFNVPFVVVRAISDVADQQSHLSFDEFLAVAAKQSSLMVETLVQKLAHG.

Residue glutamate 12 is the Proton acceptor of the active site. Substrate contacts are provided by residues glycine 78, isoleucine 152, and 173-174 (ME). Aspartate 197 serves as the catalytic Proton donor.

The protein belongs to the PNP/UDP phosphorylase family. MtnN subfamily. In terms of assembly, homodimer.

It catalyses the reaction S-adenosyl-L-homocysteine + H2O = S-(5-deoxy-D-ribos-5-yl)-L-homocysteine + adenine. The catalysed reaction is S-methyl-5'-thioadenosine + H2O = 5-(methylsulfanyl)-D-ribose + adenine. It carries out the reaction 5'-deoxyadenosine + H2O = 5-deoxy-D-ribose + adenine. It functions in the pathway amino-acid biosynthesis; L-methionine biosynthesis via salvage pathway; S-methyl-5-thio-alpha-D-ribose 1-phosphate from S-methyl-5'-thioadenosine (hydrolase route): step 1/2. Catalyzes the irreversible cleavage of the glycosidic bond in both 5'-methylthioadenosine (MTA) and S-adenosylhomocysteine (SAH/AdoHcy) to adenine and the corresponding thioribose, 5'-methylthioribose and S-ribosylhomocysteine, respectively. Also cleaves 5'-deoxyadenosine, a toxic by-product of radical S-adenosylmethionine (SAM) enzymes, into 5-deoxyribose and adenine. Thus, is required for in vivo function of the radical SAM enzymes biotin synthase and lipoic acid synthase, that are inhibited by 5'-deoxyadenosine accumulation. The polypeptide is 5'-methylthioadenosine/S-adenosylhomocysteine nucleosidase (Citrobacter koseri (strain ATCC BAA-895 / CDC 4225-83 / SGSC4696)).